Here is a 349-residue protein sequence, read N- to C-terminus: Fructose-1,6-bisphosphatase class 1 (349 aa).

Mg(2+) is bound by residues Glu-91, Asp-110, Leu-112, and Asp-113. Residues 113-116 and Asn-205 each bind substrate; that span reads DGSS. Position 277 (Glu-277) interacts with Mg(2+).

The protein belongs to the FBPase class 1 family. Homotetramer. Requires Mg(2+) as cofactor.

It localises to the cytoplasm. It catalyses the reaction beta-D-fructose 1,6-bisphosphate + H2O = beta-D-fructose 6-phosphate + phosphate. The protein operates within carbohydrate biosynthesis; gluconeogenesis. The sequence is that of Fructose-1,6-bisphosphatase class 1 from Rhizobium meliloti (strain 1021) (Ensifer meliloti).